The following is a 538-amino-acid chain: Sterol esterase 2 (538 aa).

Topologically, residues Met-1–Arg-11 are cytoplasmic. The helical; Signal-anchor for type II membrane protein transmembrane segment at Leu-12 to Lys-32 threads the bilayer. The Lumenal portion of the chain corresponds to Asn-33–Arg-538. The interval Lys-42–Glu-87 is disordered. Positions Lys-60 to Arg-70 are enriched in basic residues. 2 positions are modified to phosphoserine: Ser-73 and Ser-107. Ser-287 functions as the Nucleophile in the catalytic mechanism. Catalysis depends on charge relay system residues Asp-480 and His-511.

This sequence belongs to the AB hydrolase superfamily. Not glycosylated.

The protein resides in the cell membrane. The catalysed reaction is a sterol ester + H2O = a sterol + a fatty acid + H(+). Its function is as follows. Mediates the hydrolysis of steryl esters. Required for mobilization of steryl ester, thereby playing a central role in lipid metabolism. In Saccharomyces cerevisiae (strain ATCC 204508 / S288c) (Baker's yeast), this protein is Sterol esterase 2 (YEH2).